The sequence spans 173 residues: Small ribosomal subunit protein uS5 (173 aa).

Positions 17–80 (LREKMIAVNR…EESRRNMIKV (64 aa)) constitute an S5 DRBM domain.

It belongs to the universal ribosomal protein uS5 family. Part of the 30S ribosomal subunit. Contacts proteins S4 and S8.

In terms of biological role, with S4 and S12 plays an important role in translational accuracy. Functionally, located at the back of the 30S subunit body where it stabilizes the conformation of the head with respect to the body. This chain is Small ribosomal subunit protein uS5, found in Delftia acidovorans (strain DSM 14801 / SPH-1).